We begin with the raw amino-acid sequence, 161 residues long: Transcriptional repressor NrdR (161 aa).

Residues 1–23 (MRCPFCGHPDTQVKDSRPAEDGN) form a disordered region. Residues 3-34 (CPFCGHPDTQVKDSRPAEDGNAIRRRRQCPSC) fold into a zinc finger. The span at 11 to 23 (TQVKDSRPAEDGN) shows a compositional bias: basic and acidic residues. One can recognise an ATP-cone domain in the interval 49–139 (LTVMKKSGRR…VYKDFHKVED (91 aa)).

The protein belongs to the NrdR family. Requires Zn(2+) as cofactor.

In terms of biological role, negatively regulates transcription of bacterial ribonucleotide reductase nrd genes and operons by binding to NrdR-boxes. The sequence is that of Transcriptional repressor NrdR from Maricaulis maris (strain MCS10) (Caulobacter maris).